Reading from the N-terminus, the 354-residue chain is Methylthioribose-1-phosphate isomerase (354 aa).

Residues 58-60 (RGA), Arg101, and Gln204 each bind substrate. Asp245 (proton donor) is an active-site residue. 255-256 (NK) lines the substrate pocket.

It belongs to the eIF-2B alpha/beta/delta subunits family. MtnA subfamily.

It carries out the reaction 5-(methylsulfanyl)-alpha-D-ribose 1-phosphate = 5-(methylsulfanyl)-D-ribulose 1-phosphate. Its pathway is amino-acid biosynthesis; L-methionine biosynthesis via salvage pathway; L-methionine from S-methyl-5-thio-alpha-D-ribose 1-phosphate: step 1/6. Catalyzes the interconversion of methylthioribose-1-phosphate (MTR-1-P) into methylthioribulose-1-phosphate (MTRu-1-P). The sequence is that of Methylthioribose-1-phosphate isomerase from Xanthomonas euvesicatoria pv. vesicatoria (strain 85-10) (Xanthomonas campestris pv. vesicatoria).